The sequence spans 516 residues: MYPRGVKRSQHDRHKQTAFRTIKRSITHRPTSKFISHFAKNFRGKLAPLKQLDESRLDALSLTELEQLKTIIEEKQQEKRAQNNAITFLPNLPTVPFADTNFSIKSLGLRPYNGDARDPKQRIRDRFPQTHERICLLTNDILETDLLLRYRQCLDSLTREENQQLMGDRIFSLTNSPCLAFTVATVEEACSYFKFHDLHNLPVNPQDLFMYTITVMKFEFFNKLNMAKLTCVFNDNGHGDIEYRKLRQLCGKPVLDREMPNSEFEVQQQTPDSFRHPIQQAMSIVVTFARILRQIKEHIIRTKKPQFIRDFDTERVAERYECGLISRLIGKQFSNHKCDDVSCQNRIERIMAPWKPSLFFCTYFAKDAPKFKLFPNLPHEYRNLSFTCPKVDMEPSCSYSTSRDLPQTSHRSHKNQGTPKVKSKVCVEKPDTSNLTTTKTTTEILIEESMETDNKIPDPRELNFNQAKQDEIVIININENVNSKHESESSVEMDLDLDYEADTCETNLNTYSSDSE.

Zn(2+)-binding residues include cysteine 231, histidine 336, cysteine 338, and cysteine 343. The CHC2-type zinc-finger motif lies at 231–343 (CVFNDNGHGD…SNHKCDDVSC (113 aa)). The span at 399–409 (YSTSRDLPQTS) shows a compositional bias: polar residues. The tract at residues 399–423 (YSTSRDLPQTSHRSHKNQGTPKVKS) is disordered.

The protein belongs to the HHV-1 ICP27 protein family.

It localises to the virion tegument. It is found in the virion. Its subcellular location is the host nucleus. The protein localises to the host cytoplasm. Functionally, immediate early (EI) protein that plays many roles during productive infection including regulation of viral gene expression and nuclear export of intronless viral RNAs. In Homo sapiens (Human), this protein is mRNA export factor ICP27 homolog.